The sequence spans 289 residues: uncharacterized protein (289 aa).

Residue E48 is part of the active site.

It belongs to the PhzF family.

This is an uncharacterized protein from Pasteurella multocida (strain Pm70).